Here is a 95-residue protein sequence, read N- to C-terminus: Mitochondrial import inner membrane translocase subunit Tim13 (95 aa).

Positions cysteine 46–cysteine 69 match the Twin CX3C motif motif. Cystine bridges form between cysteine 46/cysteine 69 and cysteine 50/cysteine 65.

Belongs to the small Tim family. In terms of assembly, heterohexamer; composed of 3 copies of TIMM8 (TIMM8A or TIMM8B) and 3 copies of TIMM13, named soluble 70 kDa complex. Associates with the TIM22 complex, whose core is composed of TIMM22.

It is found in the mitochondrion inner membrane. In terms of biological role, mitochondrial intermembrane chaperone that participates in the import and insertion of some multi-pass transmembrane proteins into the mitochondrial inner membrane. Also required for the transfer of beta-barrel precursors from the TOM complex to the sorting and assembly machinery (SAM complex) of the outer membrane. Acts as a chaperone-like protein that protects the hydrophobic precursors from aggregation and guide them through the mitochondrial intermembrane space. The TIMM8-TIMM13 complex mediates the import of some proteins while the predominant TIMM9-TIMM10 70 kDa complex mediates the import of much more proteins. This is Mitochondrial import inner membrane translocase subunit Tim13 (timm13) from Danio rerio (Zebrafish).